We begin with the raw amino-acid sequence, 132 residues long: MNMIEQLEQEEAARVLGEKTIPDFSAGDTLRVHVRIKEGERERIQVFEGVCIARNGGGLNESYTVRKISFGEGVERVFPLYSPNVEQIEIKRKGKVRRAKLYYLRDRRGKSARIAERVTGRGIEKREPKKKG.

The protein belongs to the bacterial ribosomal protein bL19 family.

In terms of biological role, this protein is located at the 30S-50S ribosomal subunit interface and may play a role in the structure and function of the aminoacyl-tRNA binding site. This chain is Large ribosomal subunit protein bL19, found in Maricaulis maris (strain MCS10) (Caulobacter maris).